Here is a 254-residue protein sequence, read N- to C-terminus: Large ribosomal subunit protein uL15m (254 aa).

The transit peptide at M1–I78 directs the protein to the mitochondrion. The segment at N44–K104 is disordered. Residues G64–K79 are compositionally biased toward basic residues.

Belongs to the universal ribosomal protein uL15 family. As to quaternary structure, component of the mitochondrial large ribosomal subunit (mt-LSU). Mature yeast 74S mitochondrial ribosomes consist of a small (37S) and a large (54S) subunit. The 37S small subunit contains a 15S ribosomal RNA (15S mt-rRNA) and at least 32 different proteins. The 54S large subunit contains a 21S rRNA (21S mt-rRNA) and at least 45 different proteins.

The protein resides in the mitochondrion. In terms of biological role, component of the mitochondrial ribosome (mitoribosome), a dedicated translation machinery responsible for the synthesis of mitochondrial genome-encoded proteins, including at least some of the essential transmembrane subunits of the mitochondrial respiratory chain. The mitoribosomes are attached to the mitochondrial inner membrane and translation products are cotranslationally integrated into the membrane. The sequence is that of Large ribosomal subunit protein uL15m (mrpl10) from Schizosaccharomyces pombe (strain 972 / ATCC 24843) (Fission yeast).